We begin with the raw amino-acid sequence, 99 residues long: Signal recognition particle 19 kDa protein (99 aa).

It belongs to the SRP19 family. Part of the signal recognition particle protein translocation system, which is composed of SRP and FtsY. Archaeal SRP consists of a 7S RNA molecule of 300 nucleotides and two protein subunits: SRP54 and SRP19.

It is found in the cytoplasm. Involved in targeting and insertion of nascent membrane proteins into the cytoplasmic membrane. Binds directly to 7S RNA and mediates binding of the 54 kDa subunit of the SRP. In Pyrococcus horikoshii (strain ATCC 700860 / DSM 12428 / JCM 9974 / NBRC 100139 / OT-3), this protein is Signal recognition particle 19 kDa protein.